Here is a 213-residue protein sequence, read N- to C-terminus: tRNA (guanine-N(7)-)-methyltransferase (213 aa).

S-adenosyl-L-methionine-binding residues include Glu-44, Glu-69, Asn-96, and Asp-118. Residue Asp-118 is part of the active site. Lys-122 provides a ligand contact to substrate. The interaction with RNA stretch occupies residues Arg-124 to Arg-129. Substrate contacts are provided by residues Asp-154 and Thr-191–Glu-194.

The protein belongs to the class I-like SAM-binding methyltransferase superfamily. TrmB family.

The catalysed reaction is guanosine(46) in tRNA + S-adenosyl-L-methionine = N(7)-methylguanosine(46) in tRNA + S-adenosyl-L-homocysteine. It functions in the pathway tRNA modification; N(7)-methylguanine-tRNA biosynthesis. Catalyzes the formation of N(7)-methylguanine at position 46 (m7G46) in tRNA. In Bacillus licheniformis (strain ATCC 14580 / DSM 13 / JCM 2505 / CCUG 7422 / NBRC 12200 / NCIMB 9375 / NCTC 10341 / NRRL NRS-1264 / Gibson 46), this protein is tRNA (guanine-N(7)-)-methyltransferase.